The following is a 286-amino-acid chain: MGIHIKRWCFIILVASAAYILRDSFDPETLANTRVLVTGASTGIGEEIAYHYARAGAKLVLTARREHALQEVKSRCLELGAKNVFLVVADMASHNAREQVVAEALSALGGLDYLVLNHIGWTPFKMWDGDVNHTRWLMEVNFLSYIHLATAALPYLTQSKGSIIVLSSLTAKTPIPYTTSYAASKFALEGFFSSLRHELTMQNNPVSITLCILGLIDTQSAMEKIKDKITMSAYPASDAALAVVSAGAGRQREMYYPWFVRPLCFFRDWFPQHRDWFIQRMYHYNS.

An N-terminal signal peptide occupies residues 1-17 (MGIHIKRWCFIILVASA). NADP(+) is bound by residues 39 to 65 (GAST…TARR), 90 to 91 (DM), and 117 to 119 (NHI). Substrate is bound at residue Ser168. The active-site Proton acceptor is Tyr181. Residues 181 to 185 (YAASK) and 214 to 220 (GLIDTQS) contribute to the NADP(+) site.

It belongs to the short-chain dehydrogenases/reductases (SDR) family.

It is found in the secreted. It carries out the reaction cortisone + NADPH + H(+) = cortisol + NADP(+). Functionally, unidirectional NADP(+)-dependent cortisol dehydrogenase (in vitro). This Xenopus tropicalis (Western clawed frog) protein is Hydroxysteroid 11-beta-dehydrogenase 1-like protein (hsd11b1l).